A 773-amino-acid chain; its full sequence is Leucine-rich repeat-containing protein let-4 (773 aa).

A signal peptide spans 1 to 20; that stretch reads MRLLLCLLLFSTLLINSTNA. At 21 to 689 the chain is on the extracellular side; the sequence is CPGVITQACF…RLEKSFFTTT (669 aa). LRR repeat units lie at residues 61–84, 85–107, 109–132, 133–157, 159–181, 183–206, 207–230, 231–254, 256–278, 279–302, 303–326, 328–349, 350–373, 375–397, 399–421, and 486–516; these read VGLIQSLTMNQAELVELPPNFFSG, LFIRRLDLSQNKIKKIDDAAFAG, NPVLEEVVLNHNLIEKVPAAALAG, LPNLLRLDLSNNSIVEIQEQEIFPN, NKLYDINLGSNKIFSIHTSTFQN, KNSIQTINLGHNNMTAVPSSAIRG, LKQLQSLHLHKNRIEQLDALNFLN, LPVLNLLNLAGNQIHELNRQAFLN, PSLRYLYLSGNKITKLTAYQFQT, FEQLEMLDLTNNEIGAIPANSLSG, LKQLRQLYLAHNKISNISSNAFTN, SIVVLVLSSNELKTLTAGIISG, LPNLQQVSFRDNQIKTINRNAFYD, ASLVMLDLAKNQLTEIAPTTFLA, LNLLLVDLSENKLPKTPYSAFNS, and LVQIPKMQIHRNVHTTTGDQAPQIPSGAFQQ. The chain crosses the membrane as a helical span at residues 690 to 710; that stretch reads IIFICVGTAVIVLVVVIAGLC. Over 711-773 the chain is Cytoplasmic; the sequence is ISKHRQLQFE…PGSSYCNYYK (63 aa).

As to expression, in L1 larvae, expressed in a subset of epithelial cells including epidermal, vulval and rectal cells and the excretory duct and pore. Absent from internal epithelia such as the gut and pharyngeal tubes. Transiently expressed in the excretory canal cell at the 1.5-fold embryonic stage but no longer visible in this cell at hatching.

It localises to the apical cell membrane. Functionally, required for apical extracellular matrix organization and epithelial junction maintenance. This chain is Leucine-rich repeat-containing protein let-4 (let-4), found in Caenorhabditis elegans.